The following is a 446-amino-acid chain: Glutamyl-tRNA reductase (446 aa).

Residues 49 to 52 (TCNR), S107, 112 to 114 (EPQ), and Q118 each bind substrate. The Nucleophile role is filled by C50. 187–192 (GAGETI) serves as a coordination point for NADP(+). The interval 417-446 (NANEDTRESVDKEQTGTTQGAARGDQRSTG) is disordered. A compositionally biased stretch (basic and acidic residues) spans 420-430 (EDTRESVDKEQ).

Belongs to the glutamyl-tRNA reductase family. In terms of assembly, homodimer.

The catalysed reaction is (S)-4-amino-5-oxopentanoate + tRNA(Glu) + NADP(+) = L-glutamyl-tRNA(Glu) + NADPH + H(+). It participates in porphyrin-containing compound metabolism; protoporphyrin-IX biosynthesis; 5-aminolevulinate from L-glutamyl-tRNA(Glu): step 1/2. Functionally, catalyzes the NADPH-dependent reduction of glutamyl-tRNA(Glu) to glutamate 1-semialdehyde (GSA). In Alkalilimnicola ehrlichii (strain ATCC BAA-1101 / DSM 17681 / MLHE-1), this protein is Glutamyl-tRNA reductase.